The primary structure comprises 202 residues: MESQCRPNVDGVHNGVESHVKVVEKPRSVGSSSEFVLRILGLLLTLIAAVVAGVDKQTKIIPLTLIKTLPSLHVPVTAKWSDMSAFVYLVVSNAIACSYAAISLVLVTMLGRRGKGGRVLAVIVLDLHMVGLLFSANGAATAVGVLGQYGNSHVEWKKVCNVFDSFCHHLVASLALSFLGSLSFLGLVLLAILNLHKKSSTK.

The Cytoplasmic segment spans residues 1-33; that stretch reads MESQCRPNVDGVHNGVESHVKVVEKPRSVGSSS. The helical transmembrane segment at 34-54 threads the bilayer; that stretch reads EFVLRILGLLLTLIAAVVAGV. At 55–85 the chain is on the extracellular side; sequence DKQTKIIPLTLIKTLPSLHVPVTAKWSDMSA. Residues 86-106 form a helical membrane-spanning segment; it reads FVYLVVSNAIACSYAAISLVL. The Cytoplasmic segment spans residues 107 to 118; that stretch reads VTMLGRRGKGGR. The chain crosses the membrane as a helical span at residues 119–139; the sequence is VLAVIVLDLHMVGLLFSANGA. The Extracellular portion of the chain corresponds to 140 to 172; that stretch reads ATAVGVLGQYGNSHVEWKKVCNVFDSFCHHLVA. The helical transmembrane segment at 173–193 threads the bilayer; sequence SLALSFLGSLSFLGLVLLAIL. Over 194–202 the chain is Cytoplasmic; that stretch reads NLHKKSSTK.

Belongs to the Casparian strip membrane proteins (CASP) family. In terms of assembly, homodimer and heterodimers.

It localises to the cell membrane. In Vitis vinifera (Grape), this protein is CASP-like protein 1E1.